A 143-amino-acid polypeptide reads, in one-letter code: Large ribosomal subunit protein uL11 (143 aa).

The protein belongs to the universal ribosomal protein uL11 family. As to quaternary structure, part of the ribosomal stalk of the 50S ribosomal subunit. Interacts with L10 and the large rRNA to form the base of the stalk. L10 forms an elongated spine to which L12 dimers bind in a sequential fashion forming a multimeric L10(L12)X complex. In terms of processing, one or more lysine residues are methylated.

Its function is as follows. Forms part of the ribosomal stalk which helps the ribosome interact with GTP-bound translation factors. In Salinispora tropica (strain ATCC BAA-916 / DSM 44818 / JCM 13857 / NBRC 105044 / CNB-440), this protein is Large ribosomal subunit protein uL11.